The sequence spans 224 residues: Phosphoribosylformylglycinamidine synthase subunit PurQ (224 aa).

In terms of domain architecture, Glutamine amidotransferase type-1 spans 2–224 (TVAVVRFGGS…DGQGILGAFA (223 aa)). Catalysis depends on cysteine 85, which acts as the Nucleophile. Residues histidine 202 and glutamate 204 contribute to the active site.

Part of the FGAM synthase complex composed of 1 PurL, 1 PurQ and 2 PurS subunits.

It localises to the cytoplasm. The catalysed reaction is N(2)-formyl-N(1)-(5-phospho-beta-D-ribosyl)glycinamide + L-glutamine + ATP + H2O = 2-formamido-N(1)-(5-O-phospho-beta-D-ribosyl)acetamidine + L-glutamate + ADP + phosphate + H(+). It carries out the reaction L-glutamine + H2O = L-glutamate + NH4(+). It functions in the pathway purine metabolism; IMP biosynthesis via de novo pathway; 5-amino-1-(5-phospho-D-ribosyl)imidazole from N(2)-formyl-N(1)-(5-phospho-D-ribosyl)glycinamide: step 1/2. Part of the phosphoribosylformylglycinamidine synthase complex involved in the purines biosynthetic pathway. Catalyzes the ATP-dependent conversion of formylglycinamide ribonucleotide (FGAR) and glutamine to yield formylglycinamidine ribonucleotide (FGAM) and glutamate. The FGAM synthase complex is composed of three subunits. PurQ produces an ammonia molecule by converting glutamine to glutamate. PurL transfers the ammonia molecule to FGAR to form FGAM in an ATP-dependent manner. PurS interacts with PurQ and PurL and is thought to assist in the transfer of the ammonia molecule from PurQ to PurL. This chain is Phosphoribosylformylglycinamidine synthase subunit PurQ, found in Halobacterium salinarum (strain ATCC 700922 / JCM 11081 / NRC-1) (Halobacterium halobium).